A 188-amino-acid polypeptide reads, in one-letter code: Methylamine dehydrogenase light chain (188 aa).

Residues 1–57 (MLGNFRFDDMVEKLSRRVAGRTSRRGAIGRLGTVLAGAALVPLLPVDRRGRVSRANA) constitute a signal peptide (tat-type signal). 6 disulfides stabilise this stretch: Cys80/Cys145, Cys86/Cys118, Cys93/Cys178, Cys95/Cys143, Cys103/Cys134, and Cys135/Cys166. Position 114 is a tryptophylquinone (Trp114). Positions 114 to 165 (WVASCYNPTDGQSYLIAYRDCCGYNVSGRCPCLNTEGELPVYRPEFANDIIW) form a cross-link, tryptophan tryptophylquinone (Trp-Trp).

The protein belongs to the aromatic amine dehydrogenase light chain family. In terms of assembly, heterotetramer of two light and two heavy chains. Requires tryptophan tryptophylquinone residue as cofactor. Post-translationally, predicted to be exported by the Tat system. The position of the signal peptide cleavage has been experimentally proven. Tryptophan tryptophylquinone (TTQ) is formed by oxidation of the indole ring of a tryptophan to form tryptophylquinone followed by covalent cross-linking with another tryptophan residue.

Its subcellular location is the periplasm. It catalyses the reaction 2 oxidized [amicyanin] + methylamine + H2O = 2 reduced [amicyanin] + formaldehyde + NH4(+) + 2 H(+). It participates in one-carbon metabolism; methylamine degradation; formaldehyde from methylamine: step 1/1. In terms of biological role, methylamine dehydrogenase carries out the oxidation of methylamine. Electrons are passed from methylamine dehydrogenase to amicyanin. The protein is Methylamine dehydrogenase light chain (mauA) of Paracoccus versutus (Thiobacillus versutus).